Here is a 130-residue protein sequence, read N- to C-terminus: Small ribosomal subunit protein uS11c (130 aa).

This sequence belongs to the universal ribosomal protein uS11 family. As to quaternary structure, part of the 30S ribosomal subunit.

Its subcellular location is the plastid. It is found in the chloroplast. This is Small ribosomal subunit protein uS11c from Porphyra purpurea (Red seaweed).